A 220-amino-acid polypeptide reads, in one-letter code: MGAAARTLRLALGLLLLATLLRPADACSCSPVHPQQAFCNADVVIRAKAVSEKEVDSGNDIYGNPIKRIQYEIKQIKMFKGPEKDIEFIYTAPSSAVCGVSLDVGGKKEYLIAGKAEGDGKMHITLCDFIVPWDTLSTTQKKSLNHRYQMGCECKITRCPMIPCYISSPDECLWMDWVTEKNINGHQAKFFACIKRSDGSCAWYRGAAPPKQEFLDIEDP.

Positions 1–26 are cleaved as a signal peptide; the sequence is MGAAARTLRLALGLLLLATLLRPADA. Cysteine 27 provides a ligand contact to Zn(2+). Involved in metalloproteinase-binding stretches follow at residues 27-30 and 95-96; these read CSCS and SA. 6 disulfide bridges follow: cysteine 27–cysteine 98, cysteine 29–cysteine 127, cysteine 39–cysteine 152, cysteine 154–cysteine 201, cysteine 159–cysteine 164, and cysteine 172–cysteine 193. Positions 27 to 152 constitute an NTR domain; the sequence is CSCSPVHPQQ…SLNHRYQMGC (126 aa).

The protein belongs to the protease inhibitor I35 (TIMP) family. In terms of assembly, interacts (via the C-terminal) with MMP2 (via the C-terminal PEX domain); the interaction inhibits the MMP2 activity. The activity of TIMP2 is dependent on the presence of disulfide bonds.

It localises to the secreted. Functionally, complexes with metalloproteinases (such as collagenases) and irreversibly inactivates them by binding to their catalytic zinc cofactor. Known to act on MMP-1, MMP-2, MMP-3, MMP-7, MMP-8, MMP-9, MMP-10, MMP-13, MMP-14, MMP-15, MMP-16 and MMP-19. This Homo sapiens (Human) protein is Metalloproteinase inhibitor 2 (TIMP2).